Here is a 467-residue protein sequence, read N- to C-terminus: MSKFPTVSEILSGKVAVGEEVAVRGWVRTRRDSKAGLSFLAVYDGSCFDPIQSIINNDLANYNDEVLRLTAGCSVIVTGKVVESPAEGQAVELHATHVEVVGWVEDPDTYPMAAKRHSIEYLREVAHLRPRTNLIGAVARVRHCLAQAIHRFFNEQGFYWVATPLITASDTEGAGEMFRVSTLDLENLPRTEEGKVDFSQDFFGKESFLTVSGQLNGETYACALSKVYTFGPTFRAENSNTTRHLAEFWMVEPEFAFATLADNAKLAEDMLKYVFKAVLEERKDDMQFFAKHIDKDVITRLENFIAAPFAQVDYTDAIEILLKSGKEFEFPVSWGIDLSSEHERFLAEEYFKSPVVVKNYPKDIKAFYMRLNDDGKTVAAMDVLAPGIGEIIGGSQREERLDVLDTRMVEMGLNPEDYWWYRDLRKYGTVPHSGFGLGFERLIVYVTGLQNIREVIPFPRAPRNANF.

The protein belongs to the class-II aminoacyl-tRNA synthetase family. Homodimer.

Its subcellular location is the cytoplasm. It carries out the reaction tRNA(Asn) + L-asparagine + ATP = L-asparaginyl-tRNA(Asn) + AMP + diphosphate + H(+). The chain is Asparagine--tRNA ligase from Actinobacillus pleuropneumoniae serotype 5b (strain L20).